The chain runs to 78 residues: MSRICQITGKKPLSGNKRSHSMNAKKRKFFPNLHNHRFWLDKEKKFINLRISKQGLRLIDKYGIKKVMEKIKIKYKNV.

The interval 1–23 (MSRICQITGKKPLSGNKRSHSMN) is disordered.

Belongs to the bacterial ribosomal protein bL28 family.

This Wigglesworthia glossinidia brevipalpis protein is Large ribosomal subunit protein bL28.